The following is a 1887-amino-acid chain: Protein TIC 214 (1887 aa).

The next 6 membrane-spanning stretches (helical) occupy residues 18–38, 64–84, 87–107, 124–144, 172–192, and 221–241; these read IINSVVVVGLYYGFLTTFSIG, FITGQLMMFISIYYAPLHLAL, PHTITVLALPYLLFHFFWNNH, LSIQCVFLNNLIFQLFNHFIL, VGWLIGHILFMKWLGLVLVWI, and IFSILLFITCVYYLGRIPSPI. Disordered regions lie at residues 248 to 300, 785 to 805, and 1569 to 1603; these read EASK…EGWD, REEQTKREEKKEKDKKEDNKR, and LPSNKKIKNRSQETKEPPSQRERGSDIENKGNLSP. A compositionally biased stretch (acidic residues) spans 256-268; the sequence is VESEEERDVEIET. The span at 1578–1597 shows a compositional bias: basic and acidic residues; the sequence is RSQETKEPPSQRERGSDIEN.

Belongs to the TIC214 family. As to quaternary structure, part of the Tic complex.

The protein localises to the plastid. Its subcellular location is the chloroplast inner membrane. Functionally, involved in protein precursor import into chloroplasts. May be part of an intermediate translocation complex acting as a protein-conducting channel at the inner envelope. The chain is Protein TIC 214 from Solanum tuberosum (Potato).